The sequence spans 170 residues: MPLLDSFRVDHTRMDAPAVRVAKSMSTPKGDDITVFDLRFCVPNEEILSEKGIHTLEHLFAGFMRDHLNSNNVEIIDISPMGCRTGFYMSLIGTPSEETVAASWKAAMEDVLKVKAKSDIPELNEYQCGTYEMHSLEEAQEIAKMILDRDVKVNSNEELYLSEEFLKEHS.

Residues histidine 54, histidine 58, and cysteine 128 each contribute to the Fe cation site.

The protein belongs to the LuxS family. As to quaternary structure, homodimer. Fe cation is required as a cofactor.

It carries out the reaction S-(5-deoxy-D-ribos-5-yl)-L-homocysteine = (S)-4,5-dihydroxypentane-2,3-dione + L-homocysteine. Its function is as follows. Involved in the synthesis of autoinducer 2 (AI-2) which is secreted by bacteria and is used to communicate both the cell density and the metabolic potential of the environment. The regulation of gene expression in response to changes in cell density is called quorum sensing. Catalyzes the transformation of S-ribosylhomocysteine (RHC) to homocysteine (HC) and 4,5-dihydroxy-2,3-pentadione (DPD). This Marinomonas sp. (strain MWYL1) protein is S-ribosylhomocysteine lyase.